A 156-amino-acid chain; its full sequence is Small ribosomal subunit protein uS7 (156 aa).

It belongs to the universal ribosomal protein uS7 family. As to quaternary structure, part of the 30S ribosomal subunit. Contacts proteins S9 and S11.

Its function is as follows. One of the primary rRNA binding proteins, it binds directly to 16S rRNA where it nucleates assembly of the head domain of the 30S subunit. Is located at the subunit interface close to the decoding center, probably blocks exit of the E-site tRNA. The chain is Small ribosomal subunit protein uS7 from Prochlorococcus marinus (strain MIT 9312).